The sequence spans 246 residues: MGPQHLRLVQLFCLLGAISTLPRAGALLCYEATASRFRAVAFHNWKWLLMRNMVCKLQEGCEETLVFIETGTARGVVGFKGCSSSSSYPAQISYLVSPPGVSIASYSRVCRSYLCNNLTNLEPFVKLKASTPKSITSASCSCPTCVGEHMKDCLPNFVTTNSCPLAASTCYSSTLKFQAGFLNTTFLLMGCAREHNQLLADFHHIGSIKVTEVLNILEKSQIVGAASSRQDPAWGVVLGLLFAFRD.

A signal peptide spans 1–26; that stretch reads MGPQHLRLVQLFCLLGAISTLPRAGA. The N-linked (GlcNAc...) asparagine glycan is linked to Asn-117. A UPAR/Ly6 domain is found at 142-223; sequence CPTCVGEHMK…LNILEKSQIV (82 aa). A lipid anchor (GPI-anchor amidated alanine) is attached at Ala-225. A propeptide spans 226–246 (removed in mature form); it reads ASSRQDPAWGVVLGLLFAFRD.

The protein localises to the cell membrane. The protein is Ly6/PLAUR domain-containing protein 4 (LYPD4) of Homo sapiens (Human).